The sequence spans 344 residues: Olfactory receptor class A-like protein 4 (344 aa).

The Extracellular portion of the chain corresponds to 1 to 10 (MSEVLTVDAV). Residues 11 to 31 (LFGLLVFSGIIGNIMVIYVVF) traverse the membrane as a helical segment. Topologically, residues 32-47 (DCAKLCASRHLPPSDT) are cytoplasmic. Residues 48–68 (ILVHLCLANLLTSVFRTVPIF) form a helical membrane-spanning segment. The Extracellular segment spans residues 69-84 (VSDLGLQVWLTAGWCR). Cys83 and Cys169 are oxidised to a cystine. A helical transmembrane segment spans residues 85–105 (VFMLLWVWWRAVGCWVTLALS). The Cytoplasmic segment spans residues 106 to 130 (AFHCATLRRQHVSMGPLGHSRERRR). A helical transmembrane segment spans residues 131 to 151 (VWVVLAVVWAANLLFSLPALV). Topologically, residues 152–186 (YTTQVRGNATVELMVISCTTRPLLGCVWEFPTFQQ) are extracellular. Asn159 is a glycosylation site (N-linked (GlcNAc...) asparagine). Residues 187–207 (GYAFASSSLALNEVLPLVLMV) form a helical membrane-spanning segment. The Cytoplasmic segment spans residues 208–246 (GTNLATLQALGKHIRTVRAGGSTGAELDRHVSSERKAGH). The helical transmembrane segment at 247–267 (VIMALVALFVGCWVLQVAAVT) threads the bilayer. Residues 268-279 (YYNHNRGAHAEG) are Extracellular-facing. A helical transmembrane segment spans residues 280 to 300 (LLTVAHFSASLFVGFSPLVVA). Topologically, residues 301–344 (LGHGKLRRRISGILQSCMHRLKQTQDKPAEITEKDGRTTQSAMK) are cytoplasmic. A compositionally biased stretch (basic and acidic residues) spans 324–337 (TQDKPAEITEKDGR). A disordered region spans residues 324–344 (TQDKPAEITEKDGRTTQSAMK).

This sequence belongs to the G-protein coupled receptor 1 family. Highly expressed in the olfactory rosette. Specifically localizes to crypt neurons in the olfactory neuroepithelium. Colocalizes with the inhibitory G-protein gnaia in crypt neurons. Not detected in other tissues tested.

It localises to the cell membrane. Probable olfactory receptor. The protein is Olfactory receptor class A-like protein 4 (ora4) of Danio rerio (Zebrafish).